The following is a 152-amino-acid chain: D-aminoacyl-tRNA deacylase (152 aa).

The Gly-cisPro motif, important for rejection of L-amino acids signature appears at 142–143; sequence GP.

Belongs to the DTD family. In terms of assembly, homodimer.

The protein resides in the cytoplasm. It catalyses the reaction glycyl-tRNA(Ala) + H2O = tRNA(Ala) + glycine + H(+). The enzyme catalyses a D-aminoacyl-tRNA + H2O = a tRNA + a D-alpha-amino acid + H(+). Its function is as follows. An aminoacyl-tRNA editing enzyme that deacylates mischarged D-aminoacyl-tRNAs. Also deacylates mischarged glycyl-tRNA(Ala), protecting cells against glycine mischarging by AlaRS. Acts via tRNA-based rather than protein-based catalysis; rejects L-amino acids rather than detecting D-amino acids in the active site. By recycling D-aminoacyl-tRNA to D-amino acids and free tRNA molecules, this enzyme counteracts the toxicity associated with the formation of D-aminoacyl-tRNA entities in vivo and helps enforce protein L-homochirality. This Burkholderia multivorans (strain ATCC 17616 / 249) protein is D-aminoacyl-tRNA deacylase.